Reading from the N-terminus, the 277-residue chain is Ribonuclease HII (277 aa).

A disordered region spans residues 1-32 (MIRNQANKPGRAKAATAARKSPLTKSAAKPAA). A compositionally biased stretch (low complexity) spans 20–32 (KSPLTKSAAKPAA). The RNase H type-2 domain maps to 64–252 (WPVAGCDEAG…VVAARRKHQP (189 aa)). Residues Asp70, Glu71, and Asp161 each coordinate a divalent metal cation.

This sequence belongs to the RNase HII family. It depends on Mn(2+) as a cofactor. Requires Mg(2+) as cofactor.

Its subcellular location is the cytoplasm. The enzyme catalyses Endonucleolytic cleavage to 5'-phosphomonoester.. Functionally, endonuclease that specifically degrades the RNA of RNA-DNA hybrids. The polypeptide is Ribonuclease HII (Bradyrhizobium sp. (strain ORS 278)).